The following is a 426-amino-acid chain: Glucose-6-phosphate isomerase (426 aa).

The active-site Proton donor is the Glu-282. Active-site residues include His-303 and Lys-419.

It belongs to the GPI family.

The protein localises to the cytoplasm. The catalysed reaction is alpha-D-glucose 6-phosphate = beta-D-fructose 6-phosphate. It functions in the pathway carbohydrate biosynthesis; gluconeogenesis. It participates in carbohydrate degradation; glycolysis; D-glyceraldehyde 3-phosphate and glycerone phosphate from D-glucose: step 2/4. Its function is as follows. Catalyzes the reversible isomerization of glucose-6-phosphate to fructose-6-phosphate. This chain is Glucose-6-phosphate isomerase, found in Mycoplasmoides gallisepticum (strain R(low / passage 15 / clone 2)) (Mycoplasma gallisepticum).